The following is a 363-amino-acid chain: Fructose-bisphosphate aldolase 2 (363 aa).

S61 contacts D-glyceraldehyde 3-phosphate. D109 (proton donor) is an active-site residue. Zn(2+) contacts are provided by H110, D144, E174, and H226. Dihydroxyacetone phosphate is bound at residue G227. Residue H264 participates in Zn(2+) binding. Dihydroxyacetone phosphate is bound at residue 265 to 267 (GGS).

Belongs to the class II fructose-bisphosphate aldolase family. In terms of assembly, homodimer. The cofactor is Zn(2+).

The enzyme catalyses beta-D-fructose 1,6-bisphosphate = D-glyceraldehyde 3-phosphate + dihydroxyacetone phosphate. The protein operates within carbohydrate degradation; glycolysis; D-glyceraldehyde 3-phosphate and glycerone phosphate from D-glucose: step 4/4. In terms of biological role, catalyzes the aldol condensation of dihydroxyacetone phosphate (DHAP or glycerone-phosphate) with glyceraldehyde 3-phosphate (G3P) to form fructose 1,6-bisphosphate (FBP) in gluconeogenesis and the reverse reaction in glycolysis. This Paracoccidioides lutzii (strain ATCC MYA-826 / Pb01) (Paracoccidioides brasiliensis) protein is Fructose-bisphosphate aldolase 2 (FBA2).